Consider the following 880-residue polypeptide: Pyruvate, phosphate dikinase (880 aa).

Residues 1 to 348 (MNKLIYYFGN…LYILQTRTAK (348 aa)) are N-terminal. An ATP-binding site is contributed by R97. The interval 349 to 405 (RTAIAAINIAVQMVEEKLISKEQALMRIDPESLNQLLHTRIDYSKKLTAIAEGLPAS) is linker 1. The segment at 406-503 (PGAATGIVVF…VIKQGDIITI (98 aa)) is central. The residue at position 458 (T458) is a Phosphothreonine; by PDRP1. H460 serves as the catalytic Tele-phosphohistidine intermediate. Residues 504 to 538 (DGGSGKIFLGEMPLIQPTFSEESTLILDWADEISS) are linker 2. The interval 539-879 (LKVRANAETV…AAAQAKIKQG (341 aa)) is C-terminal. Positions 566, 622, 750, 771, 772, 773, and 774 each coordinate substrate. E750 lines the Mg(2+) pocket. Position 774 (D774) interacts with Mg(2+). C836 functions as the Proton donor in the catalytic mechanism.

It belongs to the PEP-utilizing enzyme family. In terms of assembly, homodimer. Mg(2+) serves as cofactor. Phosphorylation of Thr-458 in the dark inactivates the enzyme. Dephosphorylation upon light stimulation reactivates the enzyme.

The enzyme catalyses pyruvate + phosphate + ATP = phosphoenolpyruvate + AMP + diphosphate + H(+). With respect to regulation, activated by light-induced dephosphorylation. Inhibited by dark-induced phosphorylation. Both reactions are catalyzed by PDRP1. Its function is as follows. Catalyzes the reversible phosphorylation of pyruvate and phosphate. This chain is Pyruvate, phosphate dikinase (ppdK), found in Rickettsia typhi (strain ATCC VR-144 / Wilmington).